Reading from the N-terminus, the 112-residue chain is uncharacterized protein (112 aa).

The chain crosses the membrane as a helical span at residues 62-82; it reads THSFIFFILFLFIFIFLTFSH.

The protein resides in the membrane. This is an uncharacterized protein from Saccharomyces cerevisiae (strain ATCC 204508 / S288c) (Baker's yeast).